The chain runs to 226 residues: Glyceraldehyde 3-phosphate phosphatase (226 aa).

The protein belongs to the HAD-like hydrolase superfamily. The cofactor is Mg(2+).

Catalyzes the dephosphorylation of D,L-glyceraldehyde 3-phosphate in vitro. This chain is Glyceraldehyde 3-phosphate phosphatase, found in Methanothermobacter thermautotrophicus (strain ATCC 29096 / DSM 1053 / JCM 10044 / NBRC 100330 / Delta H) (Methanobacterium thermoautotrophicum).